The chain runs to 168 residues: DNA damage-inducible transcript 3 protein (168 aa).

Positions 10-18 are interaction with TRIB3; it reads LETVSSWEL. Residues 10-26 form an N-terminal region; it reads LETVSSWELEAWYEDLQ. Ser-14, Ser-15, Ser-30, and Ser-31 each carry phosphoserine; by CK2. Residues 30–43 show a composition bias toward polar residues; sequence SSDENGGPYSSSLG. A disordered region spans residues 30–168; that stretch reads SSDENGGPYS…DRPHVNLQQV (139 aa). Low complexity predominate over residues 74-87; sequence SSSQSPRSPDSSQS. Ser-78 and Ser-81 each carry phosphoserine; by MAPK14. A bZIP domain is found at 98–161; sequence GRTRKRKQSG…EATRPGSDRP (64 aa). Positions 101–129 are basic motif; that stretch reads RKRKQSGQCPARGTGKQRMKEKEQENERK. Over residues 118–162 the composition is skewed to basic and acidic residues; it reads RMKEKEQENERKVAQLAEENERLKQEIERLTREVEATRPGSDRPH. Positions 133–147 are leucine-zipper; the sequence is LAEENERLKQEIERL.

It belongs to the bZIP family. As to quaternary structure, heterodimer. Interacts with TCF7L2/TCF4, EP300/P300, HDAC1, HDAC5 and HDAC6. Interacts with TRIB3 which blocks its association with EP300/P300. Interacts with FOXO3, CEBPB and ATF4. Ubiquitinated, leading to its degradation by the proteasome. In terms of processing, phosphorylation at serine residues by MAPK14 enhances its transcriptional activation activity while phosphorylation at serine residues by CK2 inhibits its transcriptional activation activity.

The protein resides in the cytoplasm. Its subcellular location is the nucleus. Its function is as follows. Multifunctional transcription factor in ER stress response. Plays an essential role in the response to a wide variety of cell stresses and induces cell cycle arrest and apoptosis in response to ER stress. Plays a dual role both as an inhibitor of CCAAT/enhancer-binding protein (C/EBP) function and as an activator of other genes. Acts as a dominant-negative regulator of C/EBP-induced transcription: dimerizes with members of the C/EBP family, impairs their association with C/EBP binding sites in the promoter regions, and inhibits the expression of C/EBP regulated genes. Positively regulates the transcription of TRIB3, IL6, IL8, IL23, TNFRSF10B/DR5, PPP1R15A/GADD34, BBC3/PUMA, BCL2L11/BIM and ERO1L. Negatively regulates; expression of BCL2 and MYOD1, ATF4-dependent transcriptional activation of asparagine synthetase (ASNS), CEBPA-dependent transcriptional activation of hepcidin (HAMP) and CEBPB-mediated expression of peroxisome proliferator-activated receptor gamma (PPARG). Inhibits the canonical Wnt signaling pathway by binding to TCF7L2/TCF4, impairing its DNA-binding properties and repressing its transcriptional activity. Plays a regulatory role in the inflammatory response through the induction of caspase-11 (CASP4/CASP11) which induces the activation of caspase-1 (CASP1) and both these caspases increase the activation of pro-IL1B to mature IL1B which is involved in the inflammatory response. The sequence is that of DNA damage-inducible transcript 3 protein (DDIT3) from Cricetulus griseus (Chinese hamster).